A 98-amino-acid chain; its full sequence is Glutaredoxin 1 (98 aa).

The Glutaredoxin domain maps to 1-98; that stretch reads MNKAILHAII…KLLEGQPKKD (98 aa). A disulfide bridge connects residues C17 and C20.

This sequence belongs to the glutaredoxin family. As to quaternary structure, monomer.

It is found in the cytoplasm. Functionally, has a glutathione-disulfide oxidoreductase activity in the presence of NADPH and glutathione reductase. Reduces low molecular weight disulfides and proteins. This chain is Glutaredoxin 1 (grxC1), found in Rickettsia bellii (strain RML369-C).